The primary structure comprises 507 residues: ATP synthase subunit alpha (507 aa).

An ATP-binding site is contributed by G168–T175.

The protein belongs to the ATPase alpha/beta chains family. In terms of assembly, F-type ATPases have 2 components, CF(1) - the catalytic core - and CF(0) - the membrane proton channel. CF(1) has five subunits: alpha(3), beta(3), gamma(1), delta(1), epsilon(1). CF(0) has three main subunits: a(1), b(2) and c(9-12). The alpha and beta chains form an alternating ring which encloses part of the gamma chain. CF(1) is attached to CF(0) by a central stalk formed by the gamma and epsilon chains, while a peripheral stalk is formed by the delta and b chains.

Its subcellular location is the cell membrane. It carries out the reaction ATP + H2O + 4 H(+)(in) = ADP + phosphate + 5 H(+)(out). Its function is as follows. Produces ATP from ADP in the presence of a proton gradient across the membrane. The alpha chain is a regulatory subunit. The polypeptide is ATP synthase subunit alpha (Mesomycoplasma hyopneumoniae (strain J / ATCC 25934 / NCTC 10110) (Mycoplasma hyopneumoniae)).